Consider the following 144-residue polypeptide: Transcriptional regulator SlyA (144 aa).

Positions 2–135 constitute an HTH marR-type domain; that stretch reads ESPLGSDLAR…LSNMIAKLEK (134 aa). Positions 49–72 form a DNA-binding region, H-T-H motif; the sequence is QIQLAKAIGIEQPSLVRTLDQLEE.

The protein belongs to the SlyA family. In terms of assembly, homodimer.

Transcription regulator that can specifically activate or repress expression of target genes. This is Transcriptional regulator SlyA from Sodalis glossinidius (strain morsitans).